The chain runs to 272 residues: Proteasome subunit beta type-5 (272 aa).

A propeptide spans 1–62 (MINIDFDNIE…APKALEFAHG (62 aa)) (removed in mature form). Residue T63 is the Nucleophile of the active site.

It belongs to the peptidase T1B family. As to quaternary structure, the 26S proteasome consists of a 20S proteasome core and two 19S regulatory subunits. The 20S proteasome core is composed of 28 subunits that are arranged in four stacked rings, resulting in a barrel-shaped structure. The two end rings are each formed by seven alpha subunits, and the two central rings are each formed by seven beta subunits. The catalytic chamber with the active sites is on the inside of the barrel.

Its subcellular location is the cytoplasm. It is found in the nucleus. It carries out the reaction Cleavage of peptide bonds with very broad specificity.. Functionally, the proteasome is a multicatalytic proteinase complex which is characterized by its ability to cleave peptides with Arg, Phe, Tyr, Leu, and Glu adjacent to the leaving group at neutral or slightly basic pH. The proteasome has an ATP-dependent proteolytic activity. In Dictyostelium discoideum (Social amoeba), this protein is Proteasome subunit beta type-5 (psmB5).